The sequence spans 100 residues: Urease subunit gamma (100 aa).

This sequence belongs to the urease gamma subunit family. As to quaternary structure, heterotrimer of UreA (gamma), UreB (beta) and UreC (alpha) subunits. Three heterotrimers associate to form the active enzyme.

Its subcellular location is the cytoplasm. It carries out the reaction urea + 2 H2O + H(+) = hydrogencarbonate + 2 NH4(+). It functions in the pathway nitrogen metabolism; urea degradation; CO(2) and NH(3) from urea (urease route): step 1/1. The protein is Urease subunit gamma of Marinobacter nauticus (strain ATCC 700491 / DSM 11845 / VT8) (Marinobacter aquaeolei).